Reading from the N-terminus, the 1114-residue chain is Putative surface protein SAV2496/SAV2497 (1114 aa).

The first 50 residues, 1 to 50 (MRDKKGPVNKRVDFLSNKLNKYSIRKFTVGTASILIGSLMYLGTQQEAEA), serve as a signal peptide directing secretion. 3 disordered regions span residues 76–116 (TNKD…EDTP), 440–473 (KFNP…NPLT), and 496–1088 (EYGP…TGLE). Basic and acidic residues-rich tracts occupy residues 96-116 (DTIE…EDTP), 451-461 (KVTREGQKGEK), 505-523 (GHRD…EEVP), 554-570 (SIVE…RKFN), and 579-589 (KVTREGQKGEK). In terms of domain architecture, G5 1 spans 419 to 501 (SAKNNNRIRK…NELTEYGPET (83 aa)). In terms of domain architecture, G5 2 spans 547-628 (YGPVKGDSIV…NELTEYGPET (82 aa)). Low complexity predominate over residues 590–604 (TTTPTLKNPLTGEII). Composition is skewed to basic and acidic residues over residues 605–618 (SKGE…KDPI), 632–650 (GHRD…EEVP), 681–697 (SIVE…RKFN), 706–716 (KVTREGQKGEK), 733–746 (SKGE…KDPI), 760–778 (GHRD…EEVP), 809–825 (SIVE…RKFN), 834–844 (KVTREGQKGEK), 861–874 (SKGE…KDPV), 918–929 (KVIEEPVDDVIK), and 946–965 (FETK…RVKQ). The G5 3 domain maps to 674 to 756 (YGPVKGDSIV…NELTEYGPET (83 aa)). The G5 4 domain occupies 802 to 884 (YGPVKGDSIV…NELTEFGGEK (83 aa)). The G5 5 domain occupies 930-1012 (HGPKTGTPET…DKIVEFGGEK (83 aa)). Positions 968–982 (QPGSKTITTPITVNP) are enriched in polar residues. A compositionally biased stretch (basic and acidic residues) spans 996–1026 (EITKQPVDKIVEFGGEKPKDPKGPENPEKPS). An LPXTG sorting signal motif is present at residues 1082 to 1086 (LPKTG). A Pentaglycyl murein peptidoglycan amidated threonine modification is found at Thr-1085. Positions 1086–1114 (GLESTQKGLIFSSIIGIAGLMLLARRRKN) are cleaved as a propeptide — removed by sortase.

It is found in the secreted. The protein resides in the cell wall. In Staphylococcus aureus (strain Mu50 / ATCC 700699), this protein is Putative surface protein SAV2496/SAV2497.